The primary structure comprises 226 residues: V-type proton ATPase subunit E 1 (226 aa).

At alanine 2 the chain carries N-acetylalanine. A Phosphotyrosine modification is found at tyrosine 56.

It belongs to the V-ATPase E subunit family. As to quaternary structure, V-ATPase is a heteromultimeric enzyme made up of two complexes: the ATP-hydrolytic V1 complex and the proton translocation V0 complex. The V1 complex consists of three catalytic AB heterodimers that form a heterohexamer, three peripheral stalks each consisting of EG heterodimers, one central rotor including subunits D and F, and the regulatory subunits C and H. The proton translocation complex V0 consists of the proton transport subunit a, a ring of proteolipid subunits c9c'', rotary subunit d, subunits e and f, and the accessory subunits ATP6AP1/Ac45 and ATP6AP2/PRR. Interacts with RABL2/RABL2A; binds preferentially to GTP-bound RABL2. Interacts with ALDOC. Interacts with RAB11B. In terms of tissue distribution, expressed in brain (at protein level).

Its subcellular location is the apical cell membrane. It is found in the cytoplasmic vesicle. It localises to the secretory vesicle. The protein resides in the synaptic vesicle membrane. The protein localises to the clathrin-coated vesicle membrane. Its function is as follows. Subunit of the V1 complex of vacuolar(H+)-ATPase (V-ATPase), a multisubunit enzyme composed of a peripheral complex (V1) that hydrolyzes ATP and a membrane integral complex (V0) that translocates protons. V-ATPase is responsible for acidifying and maintaining the pH of intracellular compartments and in some cell types, is targeted to the plasma membrane, where it is responsible for acidifying the extracellular environment. In Rattus norvegicus (Rat), this protein is V-type proton ATPase subunit E 1 (Atp6v1e1).